A 242-amino-acid polypeptide reads, in one-letter code: Polycomb group RING finger protein 3 (242 aa).

An RING-type zinc finger spans residues Cys-17–Arg-56. A disordered region spans residues Ala-115 to His-149. A compositionally biased stretch (basic and acidic residues) spans Gln-117–Glu-140. Positions Ser-132 to Leu-242 are interaction with BCORL1.

In terms of assembly, component of a PRC1-like complex that contains PCGF3, RNF2 and RYBP. Interacts with CBX6, CBX7 and CBX8. Interacts with BCORL1.

Its subcellular location is the nucleus. It localises to the nucleoplasm. Its function is as follows. Component of a Polycomb group (PcG) multiprotein PRC1-like complex, a complex class required to maintain the transcriptionally repressive state of many genes, including Hox genes, throughout development. PcG PRC1 complex acts via chromatin remodeling and modification of histones; it mediates monoubiquitination of histone H2A 'Lys-119', rendering chromatin heritably changed in its expressibility. Within the PRC1-like complex, regulates RNF2 ubiquitin ligase activity. Plays a redundant role with PCGF5 as part of a PRC1-like complex that mediates monoubiquitination of histone H2A 'Lys-119' on the X chromosome and is required for normal silencing of one copy of the X chromosome in XX females. The polypeptide is Polycomb group RING finger protein 3 (PCGF3) (Homo sapiens (Human)).